We begin with the raw amino-acid sequence, 500 residues long: ATP synthase subunit alpha (500 aa).

Position 167–174 (167–174) interacts with ATP; that stretch reads GDRQTGKT.

This sequence belongs to the ATPase alpha/beta chains family. F-type ATPases have 2 components, CF(1) - the catalytic core - and CF(0) - the membrane proton channel. CF(1) has five subunits: alpha(3), beta(3), gamma(1), delta(1), epsilon(1). CF(0) has three main subunits: a(1), b(2) and c(9-12). The alpha and beta chains form an alternating ring which encloses part of the gamma chain. CF(1) is attached to CF(0) by a central stalk formed by the gamma and epsilon chains, while a peripheral stalk is formed by the delta and b chains.

Its subcellular location is the cell inner membrane. It catalyses the reaction ATP + H2O + 4 H(+)(in) = ADP + phosphate + 5 H(+)(out). Produces ATP from ADP in the presence of a proton gradient across the membrane. The alpha chain is a regulatory subunit. The sequence is that of ATP synthase subunit alpha from Wolinella succinogenes (strain ATCC 29543 / DSM 1740 / CCUG 13145 / JCM 31913 / LMG 7466 / NCTC 11488 / FDC 602W) (Vibrio succinogenes).